We begin with the raw amino-acid sequence, 276 residues long: Rhomboid protease GlpG (276 aa).

6 consecutive transmembrane segments (helical) span residues 94–114, 142–162, 169–189, 192–212, 229–249, and 250–270; these read GPVT…MQIL, ALMH…WYLG, LGSG…GYVQ, FSGP…GYVW, LIIF…GMSM, and ANGA…VDSL. Catalysis depends on serine 201, which acts as the Nucleophile. Residue histidine 254 is part of the active site.

Belongs to the peptidase S54 family.

The protein resides in the cell inner membrane. It catalyses the reaction Cleaves type-1 transmembrane domains using a catalytic dyad composed of serine and histidine that are contributed by different transmembrane domains.. Functionally, rhomboid-type serine protease that catalyzes intramembrane proteolysis. The protein is Rhomboid protease GlpG of Escherichia coli O81 (strain ED1a).